The following is a 225-amino-acid chain: Ribosomal RNA large subunit methyltransferase E (225 aa).

Residues G76, W78, D99, D115, and D139 each coordinate S-adenosyl-L-methionine. K179 serves as the catalytic Proton acceptor.

Belongs to the class I-like SAM-binding methyltransferase superfamily. RNA methyltransferase RlmE family.

The protein localises to the cytoplasm. It catalyses the reaction uridine(2552) in 23S rRNA + S-adenosyl-L-methionine = 2'-O-methyluridine(2552) in 23S rRNA + S-adenosyl-L-homocysteine + H(+). In terms of biological role, specifically methylates the uridine in position 2552 of 23S rRNA at the 2'-O position of the ribose in the fully assembled 50S ribosomal subunit. The protein is Ribosomal RNA large subunit methyltransferase E of Afipia carboxidovorans (strain ATCC 49405 / DSM 1227 / KCTC 32145 / OM5) (Oligotropha carboxidovorans).